Reading from the N-terminus, the 491-residue chain is Glycylpeptide N-tetradecanoyltransferase (491 aa).

A tetradecanoyl-CoA-binding site is contributed by 45 to 48; the sequence is HKFW. Positions 53–79 are disordered; sequence VPQITGSGASAPMEEGPIDDPKTPADV. Residues 182–184 and 190–194 contribute to the tetradecanoyl-CoA site; these read LCV and SKRLA. Leucine 491 (proton acceptor; via carboxylate) is an active-site residue.

The protein belongs to the NMT family. Monomer.

The protein resides in the cytoplasm. The catalysed reaction is N-terminal glycyl-[protein] + tetradecanoyl-CoA = N-tetradecanoylglycyl-[protein] + CoA + H(+). Its function is as follows. Adds a myristoyl group to the N-terminal glycine residue of certain cellular proteins. This is Glycylpeptide N-tetradecanoyltransferase from Cryptococcus neoformans (Filobasidiella neoformans).